Reading from the N-terminus, the 180-residue chain is MTTALLVIDIQNDYFPNGKMALTNPEKAAQNAAKLLSHFRNTGAPVFHVQHITEGNIAHFFHPNTEGVEIHESVRPLEKETVIVKHMPNSFFNTDLNGKLQEEGVKELVVCGMMSHMCIDATVRSAVEHGYVCQVVEDACATTTLQIEDKIVPAEHVHYAFMAALNGVYATVKTTEAFLK.

This sequence belongs to the isochorismatase family.

This is an uncharacterized protein from Bacillus subtilis (strain 168).